A 422-amino-acid polypeptide reads, in one-letter code: Dihydrolipoyllysine-residue succinyltransferase component of 2-oxoglutarate dehydrogenase complex (422 aa).

Residues 1–76 (MPEVKVPELA…EVGQAIAIIG (76 aa)) form the Lipoyl-binding domain. Lys42 is modified (N6-lipoyllysine). The interval 77-184 (EGSGNASKEN…APAKEEKKYN (108 aa)) is disordered. 2 stretches are compositionally biased toward polar residues: residues 80-94 (GNAS…TPQQ) and 116-130 (NQAN…NATP). Residues 127-163 (NATPSARRYARENGVNLAEVSPKTNDVVRKEDIDKKQ) enclose the Peripheral subunit-binding (PSBD) domain. Positions 152–163 (DVVRKEDIDKKQ) are enriched in basic and acidic residues. Residues 164–176 (QAPASTQTTQQAP) show a composition bias toward low complexity. Residues His393 and Asp397 contribute to the active site.

It belongs to the 2-oxoacid dehydrogenase family. As to quaternary structure, forms a 24-polypeptide structural core with octahedral symmetry. Part of the 2-oxoglutarate dehydrogenase (OGDH) complex composed of E1 (2-oxoglutarate dehydrogenase), E2 (dihydrolipoamide succinyltransferase) and E3 (dihydrolipoamide dehydrogenase); the complex contains multiple copies of the three enzymatic components (E1, E2 and E3). (R)-lipoate serves as cofactor.

It carries out the reaction N(6)-[(R)-dihydrolipoyl]-L-lysyl-[protein] + succinyl-CoA = N(6)-[(R)-S(8)-succinyldihydrolipoyl]-L-lysyl-[protein] + CoA. The protein operates within amino-acid degradation; L-lysine degradation via saccharopine pathway; glutaryl-CoA from L-lysine: step 6/6. E2 component of the 2-oxoglutarate dehydrogenase (OGDH) complex which catalyzes the second step in the conversion of 2-oxoglutarate to succinyl-CoA and CO(2). The chain is Dihydrolipoyllysine-residue succinyltransferase component of 2-oxoglutarate dehydrogenase complex (odhB) from Staphylococcus aureus (strain Mu50 / ATCC 700699).